The sequence spans 865 residues: MIKAIIGKIIGTRNDRWIKQYKKKVLAINALEPTYEKMSDVELQNAFEELKKRVRSVEKDLQEKTLLEVLPESFAITREASKRILKMRHFDVQLIGGMVLNDGKIAEMKTGEGKTLVATLAVALNAMKGESVYVVTVNDYLAHRDSKEMEPLYQFLGYSVGTITASVRDDDERLEIYSKDIVYGTNNEFGFDYLRDNMKYSLEHKVQKSHAFAIVDEVDSILIDEARTPLIISGPVDRRMENYNKADEVAKSMQVEVDFTIDEKNRAILITEEGIKKAENLFGVDNLYKIENAALSHHLDQALKANYLFFIDKDYIVANNEVVIVDEFTGRLSEGRRFSEGLHQALEAKEGVSIKEESQTLADITFQNYFRMFSKLSGMTGTAQTEATEFLEIYNLEVVSIPTNLAIKRKDLNDLIYKSEKEKFDAVILKIKELHDKGQPVLVGTASIEKSETLHALLKKERIPHTVLNAKQHTKEAEIIKDAGLKGAVTIATNMAGRGVDIKLTDEVKELGGLYIIGTERHESRRIDNQLRGRSGRQGDPGVSQFYLSLEDNLLRIFGSDRIKGVMEKLGLKDGEHIESKLVTRAVENAQKKVENLHFESRKHLLEYDDVANEQRKSVYKFRDELLDINYDISAKIAENREYALNQIFSKLKAFDHQNLSEEELLGLKNILKEDFNASVELEDLEKASPIEKFVAEKLKSDYENKMKALDSEQRSRIERIVYLQILDNAWREHLYTMDNLKTGINLRGYNQKDPLVEYKKESYNLFLELIGDIKIEAIQTFSKIQFENEQDSSDAERYLDNFSEEREHESVTYRHEEALDEDLNVAVKAFSKTPKRNEPCPCGSGKKYKDCCAKSGPKKGLFAK.

ATP-binding positions include Q93, 111 to 115 (GEGKT), and D501. 4 residues coordinate Zn(2+): C841, C843, C852, and C853.

It belongs to the SecA family. As to quaternary structure, monomer and homodimer. Part of the essential Sec protein translocation apparatus which comprises SecA, SecYEG and auxiliary proteins SecDF-YajC and YidC. Requires Zn(2+) as cofactor.

The protein resides in the cell inner membrane. It is found in the cytoplasm. The catalysed reaction is ATP + H2O + cellular proteinSide 1 = ADP + phosphate + cellular proteinSide 2.. Part of the Sec protein translocase complex. Interacts with the SecYEG preprotein conducting channel. Has a central role in coupling the hydrolysis of ATP to the transfer of proteins into and across the cell membrane, serving as an ATP-driven molecular motor driving the stepwise translocation of polypeptide chains across the membrane. This Helicobacter pylori (strain J99 / ATCC 700824) (Campylobacter pylori J99) protein is Protein translocase subunit SecA.